Here is a 253-residue protein sequence, read N- to C-terminus: tRNA pseudouridine synthase A (253 aa).

The active-site Nucleophile is the aspartate 52. Substrate is bound at residue tyrosine 110.

Belongs to the tRNA pseudouridine synthase TruA family. As to quaternary structure, homodimer.

The catalysed reaction is uridine(38/39/40) in tRNA = pseudouridine(38/39/40) in tRNA. Formation of pseudouridine at positions 38, 39 and 40 in the anticodon stem and loop of transfer RNAs. In Thermus thermophilus (strain ATCC BAA-163 / DSM 7039 / HB27), this protein is tRNA pseudouridine synthase A.